We begin with the raw amino-acid sequence, 311 residues long: Protoheme IX farnesyltransferase (311 aa).

The next 9 helical transmembrane spans lie at 32–52, 53–73, 98–118, 120–140, 153–173, 180–200, 226–246, 248–268, and 285–305; these read VMSL…VVVD, PLYG…AGAL, ISRG…VFLM, VLIN…YIVI, IVIG…AATG, FLLF…LCLF, ILVY…TGYA, IIYG…AYRL, and FFFS…EFLI.

This sequence belongs to the UbiA prenyltransferase family. Protoheme IX farnesyltransferase subfamily.

It localises to the cell inner membrane. It catalyses the reaction heme b + (2E,6E)-farnesyl diphosphate + H2O = Fe(II)-heme o + diphosphate. It functions in the pathway porphyrin-containing compound metabolism; heme O biosynthesis; heme O from protoheme: step 1/1. In terms of biological role, converts heme B (protoheme IX) to heme O by substitution of the vinyl group on carbon 2 of heme B porphyrin ring with a hydroxyethyl farnesyl side group. The polypeptide is Protoheme IX farnesyltransferase (Bartonella bacilliformis (strain ATCC 35685 / KC583 / Herrer 020/F12,63)).